We begin with the raw amino-acid sequence, 287 residues long: MTNQSLHVNIDKWIAENETSFLPPVCNKLMFFYQLNIMYVGGPNVRKDYHIEEGEELFYQVRGDMVLKVIENGKHKDVHIREGEMFLLPARIPHSPQRQANTVGLVIERRRLSKETDGLRYFVANSTEVLFERWFYCENLGTQLVPIIKEFMDSKENETGKPDPANPIKPAPYPLNTMNVMTPFSFREWVEKQKPVLASGCPVDMFGEQFETETLLFGSGTSANKRRTDGWIWQLEGLSNVFMNGKEYSLTAGDCLLIFGETEYKWQRSQDCVALYVAQDPDRKRPY.

Positions 1-163 (MTNQSLHVNI…SKENETGKPD (163 aa)) are domain A (catalytic). Arg46 contributes to the O2 binding site. Fe cation contacts are provided by His50, Glu56, and His94. Glu56 is a binding site for substrate. The substrate site is built by Arg98 and Glu108. Positions 164–180 (PANPIKPAPYPLNTMNV) are linker. The domain B stretch occupies residues 181-287 (MTPFSFREWV…AQDPDRKRPY (107 aa)).

The protein belongs to the 3-HAO family. As to quaternary structure, monomer. Fe(2+) serves as cofactor.

It localises to the cytoplasm. Its subcellular location is the cytosol. The enzyme catalyses 3-hydroxyanthranilate + O2 = (2Z,4Z)-2-amino-3-carboxymuconate 6-semialdehyde. Its pathway is cofactor biosynthesis; NAD(+) biosynthesis; quinolinate from L-kynurenine: step 3/3. In terms of biological role, catalyzes the oxidative ring opening of 3-hydroxyanthranilate to 2-amino-3-carboxymuconate semialdehyde, which spontaneously cyclizes to quinolinate. The polypeptide is 3-hydroxyanthranilate 3,4-dioxygenase (haao) (Danio rerio (Zebrafish)).